The sequence spans 527 residues: Putative ABC transporter peptide-binding protein BMEII0859 (527 aa).

The first 23 residues, 1 to 23, serve as a signal peptide directing secretion; that stretch reads MRLRNFYSALALSAAVFAGPLYA.

The protein belongs to the bacterial solute-binding protein 5 family. In terms of assembly, the complex is composed of two ATP-binding proteins (BMEII0863 and BMEII0864), two transmembrane proteins (BMEII0860 and BMEII0861) and a solute-binding protein (BMEII0859).

Its subcellular location is the periplasm. Probably part of an ABC transporter complex that could be involved in peptide import. The sequence is that of Putative ABC transporter peptide-binding protein BMEII0859 from Brucella melitensis biotype 1 (strain ATCC 23456 / CCUG 17765 / NCTC 10094 / 16M).